The primary structure comprises 64 residues: Putative neurotoxin 6 (64 aa).

The signal sequence occupies residues 1-24 (MKNKFAALVITLFVLVLAIDNVTT).

It belongs to the scolopendra neurotoxin 6 family. Post-translationally, contains 3 disulfide bonds. In terms of tissue distribution, expressed by the venom gland.

Its subcellular location is the secreted. In Scolopendra mutilans (Chinese red-headed centipede), this protein is Putative neurotoxin 6.